The following is a 289-amino-acid chain: Acetyl-coenzyme A carboxylase carboxyl transferase subunit beta (289 aa).

One can recognise a CoA carboxyltransferase N-terminal domain in the interval 28-289 (VMTKCPECKK…QGGGMAVWQS (262 aa)). Positions 32, 35, 51, and 54 each coordinate Zn(2+). The C4-type zinc-finger motif lies at 32-54 (CPECKKIMYTKELLKNLKVCVNC).

It belongs to the AccD/PCCB family. Acetyl-CoA carboxylase is a heterohexamer composed of biotin carboxyl carrier protein (AccB), biotin carboxylase (AccC) and two subunits each of ACCase subunit alpha (AccA) and ACCase subunit beta (AccD). It depends on Zn(2+) as a cofactor.

Its subcellular location is the cytoplasm. It catalyses the reaction N(6)-carboxybiotinyl-L-lysyl-[protein] + acetyl-CoA = N(6)-biotinyl-L-lysyl-[protein] + malonyl-CoA. It participates in lipid metabolism; malonyl-CoA biosynthesis; malonyl-CoA from acetyl-CoA: step 1/1. Its function is as follows. Component of the acetyl coenzyme A carboxylase (ACC) complex. Biotin carboxylase (BC) catalyzes the carboxylation of biotin on its carrier protein (BCCP) and then the CO(2) group is transferred by the transcarboxylase to acetyl-CoA to form malonyl-CoA. The chain is Acetyl-coenzyme A carboxylase carboxyl transferase subunit beta from Bacillus cereus (strain G9842).